A 522-amino-acid chain; its full sequence is F-box-like/WD repeat-containing protein TBL1Y (522 aa).

At Ser-2 the chain carries N-acetylserine. One can recognise a LisH domain in the interval 4-36; it reads TSDEVNFLVYRYLQESGFSHSAFTFGIESHISQ. Residues 41-86 enclose the F-box-like domain; the sequence is GTLVPPSALISILQKGLQYVEAEISINKDGTVFDSRPIESLSLIVA. An N6-acetyllysine modification is found at Lys-102. The residue at position 130 (Ser-130) is a Phosphoserine. 8 WD repeats span residues 177–216, 233–272, 274–313, 316–354, 357–396, 399–447, 450–489, and 491–521; these read GHES…NGGS, PSNK…ASTL, QHKG…AKQQ, FHSA…PVKT, GHTN…CVHD, AHSK…CTHT, KHQE…LVHS, and QGTG…CVLD. Lys-287 participates in a covalent cross-link: Glycyl lysine isopeptide (Lys-Gly) (interchain with G-Cter in SUMO2).

It belongs to the WD repeat EBI family. As to quaternary structure, probable component of the N-Cor repressor complex and some E3 ubiquitin ligase complex. Interacts with NCOR2. In terms of tissue distribution, fetal brain and prostate. Expressed in the cochlear spiral ganglion neurons, and in outer and inner hair cells.

The protein resides in the nucleus. In terms of biological role, F-box-like protein involved in the recruitment of the ubiquitin/19S proteasome complex to nuclear receptor-regulated transcription units. Plays an essential role in transcription activation mediated by nuclear receptors. Probably acts as integral component of corepressor complexes that mediates the recruitment of the 19S proteasome complex, leading to the subsequent proteasomal degradation of transcription repressor complexes, thereby allowing cofactor exchange. This Homo sapiens (Human) protein is F-box-like/WD repeat-containing protein TBL1Y (TBL1Y).